Consider the following 469-residue polypeptide: Gustatory receptor for sugar taste 64f (469 aa).

Residues 1-117 (MKILPKLERK…SFSWRNIRTC (117 aa)) lie on the Cytoplasmic side of the membrane. A helical transmembrane segment spans residues 118-138 (FSLLFIASSLANFGLSLFKVL). Topologically, residues 139–146 (NNPISFNS) are extracellular. Residues 147–167 (IKPIIFRGSVLLVLIVALNLA) traverse the membrane as a helical segment. The Cytoplasmic segment spans residues 168-199 (RQWPQLMMYWHTVEKDLPQYKTQLTKWKMGHT). The helical transmembrane segment at 200–220 (ISMVMLLGMMLSFAEHILSMV) threads the bilayer. At 221–265 (SAINYASFCNRTADPIQNYFLRTNDEIFFVTSYSTTLALWGKFQN) the chain is on the extracellular side. An N-linked (GlcNAc...) asparagine glycan is attached at Asn-230. Residues 266 to 286 (VFSTFIWNYMDLFVMIVSIGL) form a helical membrane-spanning segment. The Cytoplasmic portion of the chain corresponds to 287-330 (ASKFRQLNDDLRNFKGMNMAPSYWSERRIQYRNICILCDKMDDA). A helical membrane pass occupies residues 331–351 (ISLITMVSFSNNLYFICVQLL). Residues 352–353 (RS) are Extracellular-facing. Residues 354–374 (LNTMPSVAHAVYFYFSLIFLI) form a helical membrane-spanning segment. Over 375-435 (GRTLAVSLYS…GMKFFHLTRK (61 aa)) the chain is Cytoplasmic. The helical transmembrane segment at 436–456 (LVLSVAGTIVTYELVLIQFHE) threads the bilayer. The Extracellular segment spans residues 457–469 (DNDLWDCDQSYYS).

Belongs to the insect chemoreceptor superfamily. Gustatory receptor (GR) family. Gr5a subfamily. Expressed in Gr5a-expressing sugar-sensing cells.

Its subcellular location is the cell membrane. Its function is as follows. One of the few identified sugar gustatory receptors identified so far and which promotes the starvation-induced increase of feeding motivation. Required in combination with Gr64a to detect sucrose, maltose, and glucose. This Drosophila melanogaster (Fruit fly) protein is Gustatory receptor for sugar taste 64f (Gr64f).